The primary structure comprises 305 residues: MRVAFFGTPLWAVPVLDALRKRHQVVLVVSQPDKPQGRGLRPAPSPVARYAEAEGLPLLRPARLREEAFLEALRQAAPEVAVVAAYGKLIPKEALDIPPHGFLNLHPSLLPKYRGAAPVQRALLAGERETGVSIMRLDEGLDTGPLYAVWRTPILPDEDAVALGNRLRDKGVELLLEVLERLPELTPRPQEGEASYAPPLSKEEGRLDFGESAEALYRRHRAVQPWPGSYFFHRGQRVKALRLRPEPGEGEPGVVARVGPEGVVVGTASGLLLLLEVQPEGRRAMPAADWARGYGVAPGTRLGQV.

108-111 (SLLP) is a (6S)-5,6,7,8-tetrahydrofolate binding site.

Belongs to the Fmt family.

It carries out the reaction L-methionyl-tRNA(fMet) + (6R)-10-formyltetrahydrofolate = N-formyl-L-methionyl-tRNA(fMet) + (6S)-5,6,7,8-tetrahydrofolate + H(+). Functionally, attaches a formyl group to the free amino group of methionyl-tRNA(fMet). The formyl group appears to play a dual role in the initiator identity of N-formylmethionyl-tRNA by promoting its recognition by IF2 and preventing the misappropriation of this tRNA by the elongation apparatus. This chain is Methionyl-tRNA formyltransferase, found in Thermus thermophilus (strain ATCC 27634 / DSM 579 / HB8).